Here is a 122-residue protein sequence, read N- to C-terminus: MIQPQTRLKVADNTGAKEIMCIRVLGGSRVRYGRVGDIIVASVKVATPGGQVKKGDVVKAVIIRTAKEYGRPDGSHIRFDDNAAVLIGKENNPRGTRIFGPVARELREKQFMRIVSLAPEVL.

It belongs to the universal ribosomal protein uL14 family. In terms of assembly, part of the 50S ribosomal subunit. Forms a cluster with proteins L3 and L19. In the 70S ribosome, L14 and L19 interact and together make contacts with the 16S rRNA in bridges B5 and B8.

Binds to 23S rRNA. Forms part of two intersubunit bridges in the 70S ribosome. In Chloroflexus aurantiacus (strain ATCC 29366 / DSM 635 / J-10-fl), this protein is Large ribosomal subunit protein uL14.